The primary structure comprises 94 residues: Alpha-elapitoxin-Nss2a (94 aa).

The signal sequence occupies residues 1-21 (MKTLLLTLVVVTIVCLDLGDS). Intrachain disulfides connect C24/C41, C34/C62, C47/C51, C66/C77, and C78/C83.

Belongs to the three-finger toxin family. Long-chain subfamily. Type II alpha-neurotoxin sub-subfamily. Expressed by the venom gland.

The protein resides in the secreted. Binds with high affinity to muscular (alpha-1/CHRNA1) and neuronal (alpha-7/CHRNA7) nicotinic acetylcholine receptor (nAChR) and inhibits acetylcholine from binding to the receptor, thereby impairing neuromuscular and neuronal transmission. The chain is Alpha-elapitoxin-Nss2a from Notechis scutatus scutatus (Mainland tiger snake).